Reading from the N-terminus, the 654-residue chain is Polyvinylalcohol dehydrogenase (654 aa).

Residues 1–32 (MGSHAWGGAVFSAATLIAFGSVVHASGTVAET) form the signal peptide. Positions 42 to 159 (ADQLDGETLY…AANQWNGWST (118 aa)) constitute a Cytochrome c domain. Heme c contacts are provided by Cys-55, Cys-58, and His-59.

Belongs to the bacterial PQQ dehydrogenase family. In terms of assembly, monomer. Pyrroloquinoline quinone is required as a cofactor.

The protein resides in the periplasm. It carries out the reaction a polyvinyl alcohol + 2n Fe(III)-[cytochrome c] = an oxidized polyvinyl alcohol + 2n Fe(II)-[cytochrome c] + 2n H(+). Its function is as follows. Catalyzes the oxidation of polyvinyl alcohol (PVA) in the polyvinyl alcohol degradation pathway. The protein is Polyvinylalcohol dehydrogenase (pvadh) of Sphingopyxis sp. (strain 113P3).